Here is a 275-residue protein sequence, read N- to C-terminus: Large ribosomal subunit protein uL2 (275 aa).

Disordered stretches follow at residues 1–20 (MAVK…TTAD) and 214–275 (WLGR…TRRK). Basic residues predominate over residues 255–275 (KGLKTRRKRKTSDRFIVTRRK).

The protein belongs to the universal ribosomal protein uL2 family. Part of the 50S ribosomal subunit. Forms a bridge to the 30S subunit in the 70S ribosome.

Its function is as follows. One of the primary rRNA binding proteins. Required for association of the 30S and 50S subunits to form the 70S ribosome, for tRNA binding and peptide bond formation. It has been suggested to have peptidyltransferase activity; this is somewhat controversial. Makes several contacts with the 16S rRNA in the 70S ribosome. The polypeptide is Large ribosomal subunit protein uL2 (rplB) (Deinococcus radiodurans (strain ATCC 13939 / DSM 20539 / JCM 16871 / CCUG 27074 / LMG 4051 / NBRC 15346 / NCIMB 9279 / VKM B-1422 / R1)).